Reading from the N-terminus, the 208-residue chain is Pyrophosphate-energized proton pump 2 (208 aa).

The next 5 membrane-spanning stretches (helical) occupy residues 19–39 (AYPL…TFFV), 54–74 (GLIV…SFTI), 89–109 (GGNL…IVVI), 140–160 (LAVS…GIIA), and 167–187 (LFGT…IVAL).

It belongs to the H(+)-translocating pyrophosphatase (TC 3.A.10) family. Homodimer. It depends on Mg(2+) as a cofactor.

It localises to the cell inner membrane. It carries out the reaction diphosphate + H2O + H(+)(in) = 2 phosphate + 2 H(+)(out). Functionally, proton pump that utilizes the energy of pyrophosphate hydrolysis as the driving force for proton movement across the membrane. Generates a proton motive force. This is Pyrophosphate-energized proton pump 2 (hppA2) from Mycoplana dimorpha.